We begin with the raw amino-acid sequence, 272 residues long: Ribosomal RNA small subunit methyltransferase A (272 aa).

Residues H10, L12, G37, E57, D82, and N98 each contribute to the S-adenosyl-L-methionine site.

Belongs to the class I-like SAM-binding methyltransferase superfamily. rRNA adenine N(6)-methyltransferase family. RsmA subfamily.

It localises to the cytoplasm. It catalyses the reaction adenosine(1518)/adenosine(1519) in 16S rRNA + 4 S-adenosyl-L-methionine = N(6)-dimethyladenosine(1518)/N(6)-dimethyladenosine(1519) in 16S rRNA + 4 S-adenosyl-L-homocysteine + 4 H(+). Its function is as follows. Specifically dimethylates two adjacent adenosines (A1518 and A1519) in the loop of a conserved hairpin near the 3'-end of 16S rRNA in the 30S particle. May play a critical role in biogenesis of 30S subunits. The chain is Ribosomal RNA small subunit methyltransferase A from Gloeobacter violaceus (strain ATCC 29082 / PCC 7421).